Consider the following 265-residue polypeptide: MQRYAVGIEFSGIQYRGWQTQQPGVASVQETIERVLSKIADEPITLHGAGRTDAGVHATNMVAHFDTTAIRPERGWIMGANSQLPKDISIQWIKQMDEEFHARFKATARRYRYVVYNAPHRPALLHKQVTHIYQKLDVQKMIKAASKFEGTHNFETFRAAACQSNQPVRHVKHCRLFQHGRYLVLDIQADGFLHHMVRNIMGCLLEIGQGMYEIDHIDTMFAAEDRKAAGITAPPDGLYFIQCYYPEQFDLPQPPLGPHWLNLPE.

The Nucleophile role is filled by aspartate 53. Substrate is bound at residue tyrosine 111.

Belongs to the tRNA pseudouridine synthase TruA family. Homodimer.

The catalysed reaction is uridine(38/39/40) in tRNA = pseudouridine(38/39/40) in tRNA. Formation of pseudouridine at positions 38, 39 and 40 in the anticodon stem and loop of transfer RNAs. The polypeptide is tRNA pseudouridine synthase A (Acinetobacter baumannii (strain AB307-0294)).